The sequence spans 447 residues: MTTILKHLPVGQRIGIAFSGGLDTSAALLWMRQKGAVPYAYTANLGQPDEEDYDAIPRRAMEYGAENARLIDCRKQLVAEGIAAIQCGAFHNTTGGLTYFNTTPLGRAVSGTMLVAAMKEDGVNIWGDGSTYKGNDIERFYRYGLLTNAELQIYKPWLDTDFIDELGGRHEMSEFMIACGFDYKMSVEKAYSTDSNMLGATHEAKDLEYLNSSVKIVNPIMGVKFWDESVKIPAEEVTVRFEQGHPVALNGKTFSDDVEMMLEANRIGGRHGLGMSDQIENRIIEAKSRGIYEAPGMALLHIAYERLLTGIHNEDTIEQYHAHGRQLGRLLYQGRWFDSQALMLRDSLQRWVASQITGEVTLELRRGNDYSILNTVSENLTYKPERLTMEKGDSVFSPDDRIGQLTMRNLDITDTREKLFGYAKTGLLSSSAASGVPQVENLENKGQ.

ATP-binding positions include 17–25 (AFSGGLDTS) and Ala43. Tyr99 provides a ligand contact to L-citrulline. Positions 129 and 131 each coordinate ATP. Residues Thr131, Asn135, and Asp136 each coordinate L-aspartate. Asn135 serves as a coordination point for L-citrulline. ATP is bound at residue Asp136. Positions 139 and 192 each coordinate L-citrulline. Position 194 (Asp194) interacts with ATP. L-citrulline is bound by residues Thr201, Glu203, and Glu280.

Belongs to the argininosuccinate synthase family. Type 2 subfamily. As to quaternary structure, homotetramer.

The protein localises to the cytoplasm. The catalysed reaction is L-citrulline + L-aspartate + ATP = 2-(N(omega)-L-arginino)succinate + AMP + diphosphate + H(+). The protein operates within amino-acid biosynthesis; L-arginine biosynthesis; L-arginine from L-ornithine and carbamoyl phosphate: step 2/3. This chain is Argininosuccinate synthase, found in Escherichia coli O127:H6 (strain E2348/69 / EPEC).